Consider the following 196-residue polypeptide: ATP-dependent Clp protease proteolytic subunit (196 aa).

Ser-101 functions as the Nucleophile in the catalytic mechanism. Residue His-126 is part of the active site.

The protein belongs to the peptidase S14 family. In terms of assembly, component of the chloroplastic Clp protease core complex.

The protein localises to the plastid. Its subcellular location is the chloroplast stroma. It carries out the reaction Hydrolysis of proteins to small peptides in the presence of ATP and magnesium. alpha-casein is the usual test substrate. In the absence of ATP, only oligopeptides shorter than five residues are hydrolyzed (such as succinyl-Leu-Tyr-|-NHMec, and Leu-Tyr-Leu-|-Tyr-Trp, in which cleavage of the -Tyr-|-Leu- and -Tyr-|-Trp bonds also occurs).. Its function is as follows. Cleaves peptides in various proteins in a process that requires ATP hydrolysis. Has a chymotrypsin-like activity. Plays a major role in the degradation of misfolded proteins. The sequence is that of ATP-dependent Clp protease proteolytic subunit from Nicotiana tabacum (Common tobacco).